Reading from the N-terminus, the 200-residue chain is Probable nicotinate-nucleotide adenylyltransferase (200 aa).

It belongs to the NadD family.

It catalyses the reaction nicotinate beta-D-ribonucleotide + ATP + H(+) = deamido-NAD(+) + diphosphate. Its pathway is cofactor biosynthesis; NAD(+) biosynthesis; deamido-NAD(+) from nicotinate D-ribonucleotide: step 1/1. Catalyzes the reversible adenylation of nicotinate mononucleotide (NaMN) to nicotinic acid adenine dinucleotide (NaAD). This Clostridium botulinum (strain Eklund 17B / Type B) protein is Probable nicotinate-nucleotide adenylyltransferase.